Consider the following 628-residue polypeptide: DNA ligase (628 aa).

Residues 36–40 (DVEYD), 85–86 (SL), and Glu-117 each bind NAD(+). The active-site N6-AMP-lysine intermediate is Lys-119. Positions 140, 174, 309, and 333 each coordinate NAD(+). Positions 427, 430, 446, and 452 each coordinate Zn(2+).

It belongs to the NAD-dependent DNA ligase family. LigA subfamily. It depends on Mg(2+) as a cofactor. The cofactor is Mn(2+).

The enzyme catalyses NAD(+) + (deoxyribonucleotide)n-3'-hydroxyl + 5'-phospho-(deoxyribonucleotide)m = (deoxyribonucleotide)n+m + AMP + beta-nicotinamide D-nucleotide.. Functionally, DNA ligase that catalyzes the formation of phosphodiester linkages between 5'-phosphoryl and 3'-hydroxyl groups in double-stranded DNA using NAD as a coenzyme and as the energy source for the reaction. It is essential for DNA replication and repair of damaged DNA. The chain is DNA ligase from Tropheryma whipplei (strain Twist) (Whipple's bacillus).